Reading from the N-terminus, the 179-residue chain is Large ribosomal subunit protein uL5 (179 aa).

It belongs to the universal ribosomal protein uL5 family. As to quaternary structure, part of the 50S ribosomal subunit; part of the 5S rRNA/L5/L18/L25 subcomplex. Contacts the 5S rRNA and the P site tRNA. Forms a bridge to the 30S subunit in the 70S ribosome.

Its function is as follows. This is one of the proteins that bind and probably mediate the attachment of the 5S RNA into the large ribosomal subunit, where it forms part of the central protuberance. In the 70S ribosome it contacts protein S13 of the 30S subunit (bridge B1b), connecting the 2 subunits; this bridge is implicated in subunit movement. Contacts the P site tRNA; the 5S rRNA and some of its associated proteins might help stabilize positioning of ribosome-bound tRNAs. The chain is Large ribosomal subunit protein uL5 from Photobacterium profundum (strain SS9).